We begin with the raw amino-acid sequence, 330 residues long: Cytosolic iron-sulfur protein assembly protein 1 (330 aa).

WD repeat units lie at residues 12–53 (LYKE…DVLD), 56–95 (AHKK…DRTF), 105–144 (GHEN…EEYE), 151–190 (EHSQ…WECV), 195–236 (GHEG…EDDQ), 248–286 (VHKR…WKVF), and 292–330 (CHGV…EKAA).

This sequence belongs to the WD repeat CIA1 family. As to quaternary structure, interacts with NAR1.

It localises to the cytoplasm. The protein resides in the nucleus. Functionally, essential component of the cytosolic iron-sulfur (Fe/S) protein assembly machinery. Required for the maturation of extramitochondrial Fe/S proteins. The polypeptide is Cytosolic iron-sulfur protein assembly protein 1 (Saccharomyces cerevisiae (strain ATCC 204508 / S288c) (Baker's yeast)).